Here is a 394-residue protein sequence, read N- to C-terminus: Shematrin-like protein 2 (394 aa).

Positions 1 to 19 are cleaved as a signal peptide; that stretch reads MKPFISLASLIVLIASASA.

As to expression, prismatic layer of shell (at protein level). Expressed primarily in the mantle with highest level in the mantle edge and lower level in the mantle pallium.

It localises to the secreted. In Pinctada maxima (Silver-lipped pearl oyster), this protein is Shematrin-like protein 2.